Here is a 198-residue protein sequence, read N- to C-terminus: Pyridoxal 5'-phosphate synthase subunit PdxT (198 aa).

Residue 49–51 participates in L-glutamine binding; it reads GES. The active-site Nucleophile is C81. L-glutamine-binding positions include R113 and 141 to 142; that span reads IR. Active-site charge relay system residues include H177 and E179.

Belongs to the glutaminase PdxT/SNO family. As to quaternary structure, in the presence of PdxS, forms a dodecamer of heterodimers. Only shows activity in the heterodimer.

It carries out the reaction aldehydo-D-ribose 5-phosphate + D-glyceraldehyde 3-phosphate + L-glutamine = pyridoxal 5'-phosphate + L-glutamate + phosphate + 3 H2O + H(+). The catalysed reaction is L-glutamine + H2O = L-glutamate + NH4(+). Its pathway is cofactor biosynthesis; pyridoxal 5'-phosphate biosynthesis. Its function is as follows. Catalyzes the hydrolysis of glutamine to glutamate and ammonia as part of the biosynthesis of pyridoxal 5'-phosphate. The resulting ammonia molecule is channeled to the active site of PdxS. The protein is Pyridoxal 5'-phosphate synthase subunit PdxT of Mycobacterium tuberculosis (strain ATCC 25177 / H37Ra).